The following is a 31-amino-acid chain: Protamine PTP4 (31 aa).

Residues 1–31 form a disordered region; that stretch reads MPRRRRASRRIRRRRRPRVSRRRRGGRRRRR.

Testis.

The protein localises to the nucleus. Its subcellular location is the chromosome. Functionally, protamines substitute for histones in the chromatin of sperm during the haploid phase of spermatogenesis. They compact sperm DNA into a highly condensed, stable and inactive complex. This is Protamine PTP4 from Oncorhynchus mykiss (Rainbow trout).